Consider the following 345-residue polypeptide: S-adenosylmethionine:tRNA ribosyltransferase-isomerase (345 aa).

It belongs to the QueA family. In terms of assembly, monomer.

It is found in the cytoplasm. It catalyses the reaction 7-aminomethyl-7-carbaguanosine(34) in tRNA + S-adenosyl-L-methionine = epoxyqueuosine(34) in tRNA + adenine + L-methionine + 2 H(+). The protein operates within tRNA modification; tRNA-queuosine biosynthesis. Functionally, transfers and isomerizes the ribose moiety from AdoMet to the 7-aminomethyl group of 7-deazaguanine (preQ1-tRNA) to give epoxyqueuosine (oQ-tRNA). In Aromatoleum aromaticum (strain DSM 19018 / LMG 30748 / EbN1) (Azoarcus sp. (strain EbN1)), this protein is S-adenosylmethionine:tRNA ribosyltransferase-isomerase.